The chain runs to 379 residues: MEQLSSANTRFALDLFLALSENNPAGNIFISPFSISSAMAMVFLGTRGNTAAQLSKTFHFNTVEEVHSRFQSLNADINKRGASYILKLANRLYGEKTYNFLPEFLVSTQKTYGADLASVDFQHASEDARKTINQWVKGQTEGKIPELLASGMVDNMTKLVLVNAIYFKGNWKDKFMKEATTNAPFRLNKKDRKTVKMMYQKKKFAYGYIEDLKCRVLELPYQGEELSMVILLPDDIEDESTGLKKIEEQLTLEKLHEWTKPENLDFIEVNVSLPRFKLEESYTLNSDLARLGVQDLFNSSKADLSGMSGARDIFISKIVHKSFVEVNEEGTEAAAATAGIATFCMLMPEENFTADHPFLFFIRHNSSGSILFLGRFSSP.

The residue at position 1 (Met-1) is an N-acetylmethionine. N6-acetyllysine is present on residues Lys-137 and Lys-177. Ser-300 carries the phosphoserine modification. Residues 351-379 form a CARD-binding motif (CBM) region; that stretch reads NFTADHPFLFFIRHNSSGSILFLGRFSSP.

Belongs to the serpin family. Ov-serpin subfamily. As to quaternary structure, monomer. Interacts (via C-terminus) with CASP1; CASP4 (via CARD domain) and CASP5; these interactions regulate the activity of inflammatory caspases. Interacts with PRTN3. Interacts with GZMH. In terms of tissue distribution, in human bone marrow, present in all CD45+ populations. Expression levels are highest in the neutrophil lineage, intermediate in monocytic, and lowest in lymphocytic lineage. Within the neutrophil lineage, expression is highest in promyelocytes.

The protein localises to the secreted. It is found in the cytoplasm. It localises to the cytolytic granule. The protein resides in the early endosome. In terms of biological role, neutrophil serine protease inhibitor that plays an essential role in the regulation of the innate immune response, inflammation and cellular homeostasis. Acts primarily to protect the cell from proteases released in the cytoplasm during stress or infection. These proteases are important in killing microbes but when released from granules, these potent enzymes also destroy host proteins and contribute to mortality. Regulates the activity of the neutrophil proteases elastase, cathepsin G, proteinase-3, chymase, chymotrypsin, and kallikrein-3. Also acts as a potent intracellular inhibitor of GZMH by directly blocking its proteolytic activity. During inflammation, limits the activity of inflammatory caspases CASP1, CASP4 and CASP5 by suppressing their caspase-recruitment domain (CARD) oligomerization and enzymatic activation. When secreted, promotes the proliferation of beta-cells via its protease inhibitory function. This is Leukocyte elastase inhibitor (SERPINB1) from Homo sapiens (Human).